Consider the following 311-residue polypeptide: ATP synthase subunit a (311 aa).

Helical transmembrane passes span Ala62–Phe82, Ile123–Ile143, Asp170–Ile190, Leu213–Ile233, Ile253–Val273, and Trp276–Leu296.

It belongs to the ATPase A chain family. F-type ATPases have 2 components, CF(1) - the catalytic core - and CF(0) - the membrane proton channel. CF(1) has five subunits: alpha(3), beta(3), gamma(1), delta(1), epsilon(1). CF(0) has three main subunits: a(1), b(2) and c(9-12). The alpha and beta chains form an alternating ring which encloses part of the gamma chain. CF(1) is attached to CF(0) by a central stalk formed by the gamma and epsilon chains, while a peripheral stalk is formed by the delta and b chains.

Its subcellular location is the cell inner membrane. Its function is as follows. Key component of the proton channel; it plays a direct role in the translocation of protons across the membrane. This is ATP synthase subunit a from Saccharophagus degradans (strain 2-40 / ATCC 43961 / DSM 17024).